Here is a 671-residue protein sequence, read N- to C-terminus: DNA ligase (671 aa).

Residues 32–36 (DAEYD), 81–82 (SL), and Glu113 each bind NAD(+). Residue Lys115 is the N6-AMP-lysine intermediate of the active site. Arg136, Glu173, Lys290, and Lys314 together coordinate NAD(+). Cys408, Cys411, Cys426, and Cys432 together coordinate Zn(2+). Positions 593-671 (EIDSPFAGKT…ETEMLRLLGS (79 aa)) constitute a BRCT domain.

Belongs to the NAD-dependent DNA ligase family. LigA subfamily. It depends on Mg(2+) as a cofactor. The cofactor is Mn(2+).

It catalyses the reaction NAD(+) + (deoxyribonucleotide)n-3'-hydroxyl + 5'-phospho-(deoxyribonucleotide)m = (deoxyribonucleotide)n+m + AMP + beta-nicotinamide D-nucleotide.. In terms of biological role, DNA ligase that catalyzes the formation of phosphodiester linkages between 5'-phosphoryl and 3'-hydroxyl groups in double-stranded DNA using NAD as a coenzyme and as the energy source for the reaction. It is essential for DNA replication and repair of damaged DNA. The sequence is that of DNA ligase from Escherichia coli O127:H6 (strain E2348/69 / EPEC).